The chain runs to 161 residues: Large ribosomal subunit protein uL15 (161 aa).

The segment at 1–42 (MKLSDIADNAGSRKKRMRVGRGIGSGKGKQSGRGGKGQTARS) is disordered. Gly residues predominate over residues 21 to 37 (RGIGSGKGKQSGRGGKG).

It belongs to the universal ribosomal protein uL15 family. As to quaternary structure, part of the 50S ribosomal subunit.

In terms of biological role, binds to the 23S rRNA. This Bradyrhizobium diazoefficiens (strain JCM 10833 / BCRC 13528 / IAM 13628 / NBRC 14792 / USDA 110) protein is Large ribosomal subunit protein uL15.